A 723-amino-acid chain; its full sequence is 1,3-beta-galactosyl-N-acetylhexosamine phosphorylase Cphy0577 (723 aa).

The active-site Proton donor is the Asp317.

It belongs to the glycoside hydrolase 112 family.

It catalyses the reaction beta-D-galactosyl-(1-&gt;3)-N-acetyl-D-glucosamine + phosphate = alpha-D-galactose 1-phosphate + N-acetyl-D-glucosamine. Its function is as follows. Reversibly phosphorolyzes beta-D-galactopyranosyl-(1-&gt;3)-N-acetyl-D-glucosamine to form alpha-D-galactopyranose 1-phosphate and acetyl-D-glucosamine. Active towards galacto-N-biose and lacto-N-biose. Does not phosphorolyze galacto-N-tetraose or lacto-N-tetraose. In the reverse reaction has activity toward N-acetyl-D-glucosamine and N-acetyl-D-galactosamine, but not L-rhamnose, D-glucose or D-galactose. This chain is 1,3-beta-galactosyl-N-acetylhexosamine phosphorylase Cphy0577, found in Lachnoclostridium phytofermentans (strain ATCC 700394 / DSM 18823 / ISDg) (Clostridium phytofermentans).